The following is a 729-amino-acid chain: MLYKGDTLYLDWLEDGIAELVFDAPGSVNKLDTATVASLGEAIGVLEQQSDLKGLLLRSNKAAFIVGADITEFLSLFLVPEEQLSQWLHFANSVFNRLEDLPVPTIAAVNGYALGGGCECVLATDYRLATPDLRIGLPETKLGIMPGFGGSVRMPRMLGADSALEIIAAGKDVGADQALKIGLVDGVVKAEKLVEGAIAILRQAINGDLDWKAKRQPKLEPLKLSKIEAAMSFTIAKGMVAQTAGKHYPAPITAVKTIEAAARFGREEALNLENKSFVPLAHTNEARALVGIFLNDQYVKGKAKKLTKDVETPKQAAVLGAGIMGGGIAYQSAWKGVPVVMKDINDKSLTLGMTEAAKLLNKQLERGKIDGLKLAGVISTIHPTLDYAGFDRVDVVVEAVVENPKVKKAVLAETEQKVRPDTVLASNTSTIPISELANALERPENFCGMHFFNPVHRMPLVEIIRGEKSSDETIAKVVAWASKMGKTPIVVNDCPGFFVNRVLFPYFAGFSQLLRDGAGFRKIDKVMEKQFGWPMGPAYLLDVVGIDTAHHAQAVMAAGFPQRMQKDYRDAIDALFDANRFGQKNGLGFWRYKEDSKGKPKKEEDVVVDDLLAKVSQPKRDFSEEEIIARMMIPMVNEVVRCLEEGIIATPAEADMALVYGLGFPPFHGGAFRWLDTLGSAKYLDMAQQYQHLGPLYEVPEGLRNKARHNEPYYPPVEPARPVGDLKTA.

The enoyl-CoA hydratase/isomerase stretch occupies residues 1-189 (MLYKGDTLYL…KIGLVDGVVK (189 aa)). Asp296 contributes to the substrate binding site. The segment at 311–729 (ETPKQAAVLG…ARPVGDLKTA (419 aa)) is 3-hydroxyacyl-CoA dehydrogenase. Residues Met324, Asp343, 400–402 (VVE), Lys407, and Ser429 contribute to the NAD(+) site. His450 (for 3-hydroxyacyl-CoA dehydrogenase activity) is an active-site residue. Asn453 contributes to the NAD(+) binding site. 2 residues coordinate substrate: Asn500 and Tyr660. Residues 708 to 729 (RHNEPYYPPVEPARPVGDLKTA) are disordered.

The protein in the N-terminal section; belongs to the enoyl-CoA hydratase/isomerase family. This sequence in the C-terminal section; belongs to the 3-hydroxyacyl-CoA dehydrogenase family. Heterotetramer of two alpha chains (FadB) and two beta chains (FadA).

It carries out the reaction a (3S)-3-hydroxyacyl-CoA + NAD(+) = a 3-oxoacyl-CoA + NADH + H(+). The catalysed reaction is a (3S)-3-hydroxyacyl-CoA = a (2E)-enoyl-CoA + H2O. The enzyme catalyses a 4-saturated-(3S)-3-hydroxyacyl-CoA = a (3E)-enoyl-CoA + H2O. It catalyses the reaction (3S)-3-hydroxybutanoyl-CoA = (3R)-3-hydroxybutanoyl-CoA. It carries out the reaction a (3Z)-enoyl-CoA = a 4-saturated (2E)-enoyl-CoA. The catalysed reaction is a (3E)-enoyl-CoA = a 4-saturated (2E)-enoyl-CoA. It functions in the pathway lipid metabolism; fatty acid beta-oxidation. In terms of biological role, involved in the aerobic and anaerobic degradation of long-chain fatty acids via beta-oxidation cycle. Catalyzes the formation of 3-oxoacyl-CoA from enoyl-CoA via L-3-hydroxyacyl-CoA. It can also use D-3-hydroxyacyl-CoA and cis-3-enoyl-CoA as substrate. This is Fatty acid oxidation complex subunit alpha from Escherichia coli O81 (strain ED1a).